The following is a 190-amino-acid chain: Peptidyl-tRNA hydrolase (190 aa).

Tyrosine 14 is a tRNA binding site. Residue histidine 19 is the Proton acceptor of the active site. TRNA-binding residues include tyrosine 63, asparagine 65, and asparagine 112.

Belongs to the PTH family. Monomer.

The protein resides in the cytoplasm. The enzyme catalyses an N-acyl-L-alpha-aminoacyl-tRNA + H2O = an N-acyl-L-amino acid + a tRNA + H(+). Its function is as follows. Hydrolyzes ribosome-free peptidyl-tRNAs (with 1 or more amino acids incorporated), which drop off the ribosome during protein synthesis, or as a result of ribosome stalling. Catalyzes the release of premature peptidyl moieties from peptidyl-tRNA molecules trapped in stalled 50S ribosomal subunits, and thus maintains levels of free tRNAs and 50S ribosomes. The chain is Peptidyl-tRNA hydrolase from Kosmotoga olearia (strain ATCC BAA-1733 / DSM 21960 / TBF 19.5.1).